The primary structure comprises 309 residues: Ribonuclease Z (309 aa).

Zn(2+) is bound by residues H63, H65, D67, H68, H141, D212, and H270. Catalysis depends on D67, which acts as the Proton acceptor.

This sequence belongs to the RNase Z family. In terms of assembly, homodimer. It depends on Zn(2+) as a cofactor.

The enzyme catalyses Endonucleolytic cleavage of RNA, removing extra 3' nucleotides from tRNA precursor, generating 3' termini of tRNAs. A 3'-hydroxy group is left at the tRNA terminus and a 5'-phosphoryl group is left at the trailer molecule.. In terms of biological role, zinc phosphodiesterase, which displays some tRNA 3'-processing endonuclease activity. Probably involved in tRNA maturation, by removing a 3'-trailer from precursor tRNA. This is Ribonuclease Z from Lactobacillus delbrueckii subsp. bulgaricus (strain ATCC 11842 / DSM 20081 / BCRC 10696 / JCM 1002 / NBRC 13953 / NCIMB 11778 / NCTC 12712 / WDCM 00102 / Lb 14).